Here is a 150-residue protein sequence, read N- to C-terminus: Macrodomain Ter protein (150 aa).

The protein belongs to the MatP family. In terms of assembly, homodimer.

Its subcellular location is the cytoplasm. Its function is as follows. Required for spatial organization of the terminus region of the chromosome (Ter macrodomain) during the cell cycle. Prevents early segregation of duplicated Ter macrodomains during cell division. Binds specifically to matS, which is a 13 bp signature motif repeated within the Ter macrodomain. This Citrobacter koseri (strain ATCC BAA-895 / CDC 4225-83 / SGSC4696) protein is Macrodomain Ter protein.